Reading from the N-terminus, the 164-residue chain is Phosphopantetheine adenylyltransferase (164 aa).

Substrate is bound at residue serine 11. ATP-binding positions include 11–12 (SF) and histidine 19. Substrate-binding residues include lysine 43, alanine 76, and arginine 90. Residues 91–93 (GLR), glutamate 101, and 126–132 (YQHISSS) contribute to the ATP site.

It belongs to the bacterial CoaD family. As to quaternary structure, homohexamer. Requires Mg(2+) as cofactor.

Its subcellular location is the cytoplasm. It carries out the reaction (R)-4'-phosphopantetheine + ATP + H(+) = 3'-dephospho-CoA + diphosphate. It functions in the pathway cofactor biosynthesis; coenzyme A biosynthesis; CoA from (R)-pantothenate: step 4/5. Functionally, reversibly transfers an adenylyl group from ATP to 4'-phosphopantetheine, yielding dephospho-CoA (dPCoA) and pyrophosphate. The protein is Phosphopantetheine adenylyltransferase of Streptococcus gordonii (strain Challis / ATCC 35105 / BCRC 15272 / CH1 / DL1 / V288).